Here is a 426-residue protein sequence, read N- to C-terminus: Ankyrin repeat-containing protein BDA1 (426 aa).

ANK repeat units follow at residues 1–29 (MDSKLLLVTQSGSVDDLYSLIQAAPDILQ), 36–65 (IIHTPLHEASSAGKLDLAMELMILKPSFAK), 70–99 (YGLSPLHLAVENDQVELALELVKVDPSLVR), 104–134 (GGMTPLHLVAKKGDVDLLTDFLLACPESIKD), 138–167 (NGETILHITIMNDKYEQLKVLTGWMQKMRD), and 182–212 (GGNTVLHLAAYENNDKVVKQLVKCLSLDRNI). 4 helical membrane-spanning segments follow: residues 288–308 (ALLVIAALIISATFQTAAQLL), 329–349 (WGCNTVAFSIAILFSFILLPV), 355–375 (WWYFIITVPLVFSYFLLMYMM), and 380–400 (FFFLIIYEGGLFLVYLLVLYV).

It is found in the cell membrane. Its function is as follows. Involved in plant defense. Required for basal resistance against Pseudomonas syringae pv. tomato DC3000. Required for resistance against nonpathogenic bacteria. May be involved in signaling components that function downstream of SNC2 and upstream of NPR1 and WRKY70 to regulate defense responses. This chain is Ankyrin repeat-containing protein BDA1, found in Arabidopsis thaliana (Mouse-ear cress).